The chain runs to 1516 residues: Alpha-2-macroglobulin homolog (1516 aa).

Residues 1-26 (MSNLRRFSRSLAVAALVLLPFAAVQA) form the signal peptide.

It belongs to the protease inhibitor I39 (alpha-2-macroglobulin) family. Bacterial alpha-2-macroglobulin subfamily.

This is Alpha-2-macroglobulin homolog from Pseudomonas aeruginosa (strain ATCC 15692 / DSM 22644 / CIP 104116 / JCM 14847 / LMG 12228 / 1C / PRS 101 / PAO1).